Here is a 467-residue protein sequence, read N- to C-terminus: Glutamate--tRNA ligase (467 aa).

The 'HIGH' region motif lies at 9 to 19; the sequence is PSPTGFLHIGG. The short motif at 250-254 is the 'KMSKS' region element; sequence KLSKR. Residue Lys-253 coordinates ATP.

Belongs to the class-I aminoacyl-tRNA synthetase family. Glutamate--tRNA ligase type 1 subfamily. As to quaternary structure, monomer.

Its subcellular location is the cytoplasm. It catalyses the reaction tRNA(Glu) + L-glutamate + ATP = L-glutamyl-tRNA(Glu) + AMP + diphosphate. Functionally, catalyzes the attachment of glutamate to tRNA(Glu) in a two-step reaction: glutamate is first activated by ATP to form Glu-AMP and then transferred to the acceptor end of tRNA(Glu). This chain is Glutamate--tRNA ligase, found in Mesomycoplasma hyopneumoniae (strain J / ATCC 25934 / NCTC 10110) (Mycoplasma hyopneumoniae).